The sequence spans 1268 residues: Meiosis inhibitor protein 1 (1268 aa).

In terms of tissue distribution, strongly expressed in testis, weakly in brain, and not detected in spleen, liver, kidney, small intestine or colon.

In terms of biological role, required for normal meiotic chromosome synapsis. May be involved in the formation of meiotic double-strand breaks (DSBs) in spermatocytes. In Mus musculus (Mouse), this protein is Meiosis inhibitor protein 1.